The following is a 622-amino-acid chain: DNA polymerase II small subunit (622 aa).

Residues 76–113 (ISTGEGSQKVPDHEELEKITNESSVESSISTGETPKTE) are disordered. Residues 85-95 (VPDHEELEKIT) show a composition bias toward basic and acidic residues. The segment covering 96–109 (NESSVESSISTGET) has biased composition (polar residues).

The protein belongs to the DNA polymerase delta/II small subunit family. Heterodimer of a large subunit and a small subunit.

It catalyses the reaction DNA(n) + a 2'-deoxyribonucleoside 5'-triphosphate = DNA(n+1) + diphosphate. It carries out the reaction Exonucleolytic cleavage in the 3'- to 5'-direction to yield nucleoside 5'-phosphates.. Possesses two activities: a DNA synthesis (polymerase) and an exonucleolytic activity that degrades single-stranded DNA in the 3' to 5' direction. Has a template-primer preference which is characteristic of a replicative DNA polymerase. The polypeptide is DNA polymerase II small subunit (polB) (Pyrococcus horikoshii (strain ATCC 700860 / DSM 12428 / JCM 9974 / NBRC 100139 / OT-3)).